A 402-amino-acid polypeptide reads, in one-letter code: Dynactin subunit 2 (402 aa).

Residues 1 to 26 (MADPKYADLPGIARNEPDVYETSDLP) are disordered. Coiled-coil stretches lie at residues 101–132 (PQQRYQRLQHEVQELIRDVEQIQSAVKESAAE) and 357–402 (VHLD…KRLQ).

The protein belongs to the dynactin subunit 2 family. As to quaternary structure, subunit of dynactin, a multiprotein complex part of a tripartite complex with dynein and a adapter, such as BICDL1, BICD2 or HOOK3. The dynactin complex is built around ACTR1A/ACTB filament and consists of an actin-related filament composed of a shoulder domain, a pointed end and a barbed end. Its length is defined by its flexible shoulder domain. The soulder is composed of 2 DCTN1 subunits, 4 DCTN2 and 2 DCTN3.

The protein resides in the cytoplasm. The protein localises to the cytoskeleton. It localises to the microtubule organizing center. It is found in the centrosome. Its subcellular location is the membrane. Its function is as follows. Part of the dynactin complex that activates the molecular motor dynein for ultra-processive transport along microtubules. In the dynactin soulder domain, binds the ACTR1A filament and acts as a molecular ruler to determine the length. Modulates cytoplasmic dynein binding to an organelle, and plays a role in prometaphase chromosome alignment and spindle organization during mitosis. Involved in anchoring microtubules to centrosomes. The sequence is that of Dynactin subunit 2 (DCTN2) from Gallus gallus (Chicken).